The primary structure comprises 208 residues: Protein-L-isoaspartate O-methyltransferase (208 aa).

The active site involves Ser59.

It belongs to the methyltransferase superfamily. L-isoaspartyl/D-aspartyl protein methyltransferase family. As to quaternary structure, monomer.

It localises to the cytoplasm. It catalyses the reaction [protein]-L-isoaspartate + S-adenosyl-L-methionine = [protein]-L-isoaspartate alpha-methyl ester + S-adenosyl-L-homocysteine. In terms of biological role, catalyzes the methyl esterification of L-isoaspartyl residues in peptides and proteins that result from spontaneous decomposition of normal L-aspartyl and L-asparaginyl residues. It plays a role in the repair and/or degradation of damaged proteins. This chain is Protein-L-isoaspartate O-methyltransferase (pcm), found in Shigella flexneri.